The chain runs to 361 residues: Phosphoserine aminotransferase (361 aa).

Residue arginine 42 participates in L-glutamate binding. Residues 76 to 77, tryptophan 102, threonine 153, aspartate 173, and glutamine 196 contribute to the pyridoxal 5'-phosphate site; that span reads AR. Lysine 197 is subject to N6-(pyridoxal phosphate)lysine. 238–239 contacts pyridoxal 5'-phosphate; the sequence is NT.

It belongs to the class-V pyridoxal-phosphate-dependent aminotransferase family. SerC subfamily. Homodimer. Requires pyridoxal 5'-phosphate as cofactor.

It localises to the cytoplasm. It carries out the reaction O-phospho-L-serine + 2-oxoglutarate = 3-phosphooxypyruvate + L-glutamate. The catalysed reaction is 4-(phosphooxy)-L-threonine + 2-oxoglutarate = (R)-3-hydroxy-2-oxo-4-phosphooxybutanoate + L-glutamate. It participates in amino-acid biosynthesis; L-serine biosynthesis; L-serine from 3-phospho-D-glycerate: step 2/3. Its pathway is cofactor biosynthesis; pyridoxine 5'-phosphate biosynthesis; pyridoxine 5'-phosphate from D-erythrose 4-phosphate: step 3/5. Its function is as follows. Catalyzes the reversible conversion of 3-phosphohydroxypyruvate to phosphoserine and of 3-hydroxy-2-oxo-4-phosphonooxybutanoate to phosphohydroxythreonine. This chain is Phosphoserine aminotransferase, found in Mannheimia succiniciproducens (strain KCTC 0769BP / MBEL55E).